Here is a 306-residue protein sequence, read N- to C-terminus: Probable cobalamin biosynthesis protein CobD (306 aa).

5 helical membrane-spanning segments follow: residues 54–74 (LFGF…AFEI), 88–108 (ISLY…IEFS), 155–175 (ITDS…PGAF), 207–227 (ILNF…APFY), and 286–306 (SLKA…ILFM).

This sequence belongs to the CobD/CbiB family.

Its subcellular location is the cell membrane. It participates in cofactor biosynthesis; adenosylcobalamin biosynthesis. Its function is as follows. Converts cobyric acid to cobinamide by the addition of aminopropanol on the F carboxylic group. The protein is Probable cobalamin biosynthesis protein CobD of Methanococcus maripaludis (strain DSM 14266 / JCM 13030 / NBRC 101832 / S2 / LL).